Reading from the N-terminus, the 176-residue chain is Salivary antigen 1 (176 aa).

An N-terminal signal peptide occupies residues 1–18; sequence MNYCFLVFLVYLVFAVNG.

The protein resides in the secreted. The sequence is that of Salivary antigen 1 from Ctenocephalides felis (Cat flea).